The following is a 546-amino-acid chain: MRLTVWTYEGPPQVGAMRVATAMRGVHYVVHAPQGDSYADLLFTMIERRPGRPAVSYTSFQARDLGTDTAALFKTAAADAVARFQPEALLVGSSCTGELIQDDPGGLAKALGLSIPVIPLELPSYQRKENWGAAETFYRLVRTMAGPAAPAPGTPRAPRPAGQRPRCNLLGPTALGFRHRDDVQAVVALLGRMGVDVAVVAPLGASPADLARLGEADFNVVLYPEIADTAVRWLERAFGQPSVRTVPIGVGATRAFIAEVAAVAGVDPAPALAEESLRLPWWSRSVDSTYLTGKRVFIFGDATHAVAAARVATEEFGFEVVGLGTYAREYARELRACAGALGLEALITDDYLDVEAAIADAHPDLVLGTQMERHIAKRLGVPCAVISAPVHVQDFPARTAPQMGFDGANVLFDTWVHPLMMGLEEHLLMMFRDDFEFHGDAAPSHLSAHRPTGEAVGDAVGEPPAAPRDQAAPAATLDGSAAQSDPARTTPPGAPSWEDSAEKELRKVPFFVRGKARRNTERFAAERGLASISVETLYDAKAHFGR.

Asp36 provides a ligand contact to [4Fe-4S] cluster. Asp287 acts as the Proton donor in catalysis. 422 to 423 (GL) lines the substrate pocket. The disordered stretch occupies residues 443–501 (PSHLSAHRPTGEAVGDAVGEPPAAPRDQAAPAATLDGSAAQSDPARTTPPGAPSWEDSA).

It belongs to the ChlB/BchB/BchZ family. As to quaternary structure, protochlorophyllide reductase is composed of three subunits; BchL, BchN and BchB. Forms a heterotetramer of two BchB and two BchN subunits. [4Fe-4S] cluster is required as a cofactor.

The catalysed reaction is chlorophyllide a + oxidized 2[4Fe-4S]-[ferredoxin] + 2 ADP + 2 phosphate = protochlorophyllide a + reduced 2[4Fe-4S]-[ferredoxin] + 2 ATP + 2 H2O. The protein operates within porphyrin-containing compound metabolism; bacteriochlorophyll biosynthesis (light-independent). Functionally, component of the dark-operative protochlorophyllide reductase (DPOR) that uses Mg-ATP and reduced ferredoxin to reduce ring D of protochlorophyllide (Pchlide) to form chlorophyllide a (Chlide). This reaction is light-independent. The NB-protein (BchN-BchB) is the catalytic component of the complex. This chain is Light-independent protochlorophyllide reductase subunit B, found in Rhodospirillum rubrum (strain ATCC 11170 / ATH 1.1.1 / DSM 467 / LMG 4362 / NCIMB 8255 / S1).